A 238-amino-acid polypeptide reads, in one-letter code: Purine nucleoside phosphorylase DeoD-type (238 aa).

His4 provides a ligand contact to a purine D-ribonucleoside. Residues Gly20, Arg24, Arg43, and 87 to 90 (RVGS) contribute to the phosphate site. A purine D-ribonucleoside is bound by residues 179 to 181 (EME) and 203 to 204 (SD). Asp204 acts as the Proton donor in catalysis.

The protein belongs to the PNP/UDP phosphorylase family. In terms of assembly, homohexamer; trimer of homodimers.

The catalysed reaction is a purine D-ribonucleoside + phosphate = a purine nucleobase + alpha-D-ribose 1-phosphate. It carries out the reaction a purine 2'-deoxy-D-ribonucleoside + phosphate = a purine nucleobase + 2-deoxy-alpha-D-ribose 1-phosphate. Functionally, catalyzes the reversible phosphorolytic breakdown of the N-glycosidic bond in the beta-(deoxy)ribonucleoside molecules, with the formation of the corresponding free purine bases and pentose-1-phosphate. In Haemophilus influenzae (strain PittEE), this protein is Purine nucleoside phosphorylase DeoD-type.